Reading from the N-terminus, the 212-residue chain is Small ribosomal subunit protein eS1 (212 aa).

This sequence belongs to the eukaryotic ribosomal protein eS1 family.

The protein is Small ribosomal subunit protein eS1 of Staphylothermus marinus (strain ATCC 43588 / DSM 3639 / JCM 9404 / F1).